A 292-amino-acid polypeptide reads, in one-letter code: Mycothiol acetyltransferase (292 aa).

N-acetyltransferase domains are found at residues 13 to 168 and 159 to 292; these read ALDR…KWLQ and KSVA…VYEK. Glu-40 contacts 1D-myo-inositol 2-(L-cysteinylamino)-2-deoxy-alpha-D-glucopyranoside. 77 to 79 contributes to the acetyl-CoA binding site; the sequence is LAV. Residues Glu-179, Lys-218, and Glu-226 each contribute to the 1D-myo-inositol 2-(L-cysteinylamino)-2-deoxy-alpha-D-glucopyranoside site. Residues 230 to 232 and 237 to 243 each bind acetyl-CoA; these read VGL and RGRGLGD. Tyr-264 contributes to the 1D-myo-inositol 2-(L-cysteinylamino)-2-deoxy-alpha-D-glucopyranoside binding site.

The protein belongs to the acetyltransferase family. MshD subfamily. Monomer.

The catalysed reaction is 1D-myo-inositol 2-(L-cysteinylamino)-2-deoxy-alpha-D-glucopyranoside + acetyl-CoA = mycothiol + CoA + H(+). Its function is as follows. Catalyzes the transfer of acetyl from acetyl-CoA to desacetylmycothiol (Cys-GlcN-Ins) to form mycothiol. The polypeptide is Mycothiol acetyltransferase (Corynebacterium glutamicum (strain ATCC 13032 / DSM 20300 / JCM 1318 / BCRC 11384 / CCUG 27702 / LMG 3730 / NBRC 12168 / NCIMB 10025 / NRRL B-2784 / 534)).